Reading from the N-terminus, the 483-residue chain is Membrane-bound lytic murein transglycosylase F (483 aa).

Positions 1–18 (MKGLIARFIAGFALLLWA) are cleaved as a signal peptide. The segment at 19–267 (WDMVFPWQQL…RIEEKYFNHL (249 aa)) is non-LT domain. Positions 269 to 483 (HFDYVDIQSY…SKESDSTLKE (215 aa)) are LT domain. Residue E312 is part of the active site. The tract at residues 458 to 483 (QQIQNNEEQPSVPQEISKESDSTLKE) is disordered. The segment covering 473-483 (ISKESDSTLKE) has biased composition (basic and acidic residues).

The protein in the N-terminal section; belongs to the bacterial solute-binding protein 3 family. This sequence in the C-terminal section; belongs to the transglycosylase Slt family.

Its subcellular location is the cell outer membrane. It carries out the reaction Exolytic cleavage of the (1-&gt;4)-beta-glycosidic linkage between N-acetylmuramic acid (MurNAc) and N-acetylglucosamine (GlcNAc) residues in peptidoglycan, from either the reducing or the non-reducing ends of the peptidoglycan chains, with concomitant formation of a 1,6-anhydrobond in the MurNAc residue.. Murein-degrading enzyme that degrades murein glycan strands and insoluble, high-molecular weight murein sacculi, with the concomitant formation of a 1,6-anhydromuramoyl product. Lytic transglycosylases (LTs) play an integral role in the metabolism of the peptidoglycan (PG) sacculus. Their lytic action creates space within the PG sacculus to allow for its expansion as well as for the insertion of various structures such as secretion systems and flagella. In Actinobacillus pleuropneumoniae serotype 3 (strain JL03), this protein is Membrane-bound lytic murein transglycosylase F.